Here is a 626-residue protein sequence, read N- to C-terminus: FAD-binding monooxygenase moxY (626 aa).

Residues 1-23 (MAPFLSAHGESASSSSSSSPTPS) show a composition bias toward low complexity. Residues 1–47 (MAPFLSAHGESASSSSSSSPTPSRHTRNQHVDYSTPGSTGYNIPQNT) form a disordered region. The span at 31 to 47 (VDYSTPGSTGYNIPQNT) shows a compositional bias: polar residues. FAD contacts are provided by residues 96 to 99 (TWLE), 108 to 109 (DI), and Tyr-114. 106–108 (GCD) serves as a coordination point for NADP(+). NADP(+)-binding positions include 243 to 249 (SGASSIQ) and 266 to 267 (RT).

Belongs to the FAD-binding monooxygenase family. FAD is required as a cofactor.

It participates in mycotoxin biosynthesis. FAD-binding monooxygenase; part of the fragmented gene cluster that mediates the biosynthesis of dothistromin (DOTH), a polyketide toxin very similar in structure to the aflatoxin precursor, versicolorin B. The first step of the pathway is the conversion of acetate to norsolorinic acid (NOR) and requires the fatty acid synthase subunits hexA and hexB, as well as the polyketide synthase pksA. PksA combines a hexanoyl starter unit and 7 malonyl-CoA extender units to synthesize the precursor NOR. The hexanoyl starter unit is provided to the acyl-carrier protein (ACP) domain by the fungal fatty acid synthase hexA/hexB. The second step is the conversion of NOR to averantin (AVN) and requires the norsolorinic acid ketoreductase nor1, which catalyzes the dehydration of norsolorinic acid to form (1'S)-averantin. The cytochrome P450 monooxygenase avnA then catalyzes the hydroxylation of AVN to 5'hydroxyaverantin (HAVN). The next step is performed by adhA that transforms HAVN to averufin (AVF). Averufin might then be converted to hydroxyversicolorone by cypX and avfA. Hydroxyversicolorone is further converted versiconal hemiacetal acetate (VHA) by moxY. VHA is then the substrate for the versiconal hemiacetal acetate esterase est1 to yield versiconal (VAL). Versicolorin B synthase vbsA then converts VAL to versicolorin B (VERB) by closing the bisfuran ring. Then, the activity of the versicolorin B desaturase verB leads to versicolorin A (VERA). DotB, a predicted chloroperoxidase, may perform epoxidation of the A-ring of VERA. Alternatively, a cytochrome P450, such as cypX or avnA could catalyze this step. It is also possible that another, uncharacterized, cytochrome P450 enzyme is responsible for this step. Opening of the epoxide could potentially be achieved by the epoxide hydrolase epoA. However, epoA seems not to be required for DOTH biosynthesis, but other epoxide hydrolases may have the ability to complement this hydrolysis. Alternatively, opening of the epoxide ring could be achieved non-enzymatically. The next step is the deoxygenation of ring A to yield the 5,8-dihydroxyanthraquinone which is most likely catalyzed by the NADPH dehydrogenase encoded by ver1. The last stages of DOTH biosynthesis are proposed to involve hydroxylation of the bisfuran. OrdB and norB might have oxidative roles here. An alternative possibility is that cytochrome P450 monoogenases such as avnA and cypX might perform these steps in addition to previously proposed steps. The sequence is that of FAD-binding monooxygenase moxY from Dothistroma septosporum (Red band needle blight fungus).